The following is a 478-amino-acid chain: Stromelysin-1 (478 aa).

A signal peptide spans 1 to 17 (MKTLPTLLLLCVALCSA). Positions 18 to 100 (YPLDGASRDA…PRCGVPDVGH (83 aa)) are cleaved as a propeptide — activation peptide. Positions 91–98 (PRCGVPDV) match the Cysteine switch motif. A Zn(2+)-binding site is contributed by C93. Ca(2+)-binding residues include D125 and D159. Zn(2+) contacts are provided by H169 and D171. Ca(2+) contacts are provided by D176, G177, G179, and V181. Zn(2+) is bound at residue H184. Positions 191, 193, and 195 each coordinate Ca(2+). H197 serves as a coordination point for Zn(2+). Residues D199, D200, and E202 each coordinate Ca(2+). Residue H219 coordinates Zn(2+). Residue E220 is part of the active site. 2 residues coordinate Zn(2+): H223 and H229. 4 Hemopexin repeats span residues 288–337 (PVMC…WPSL), 338–384 (PSAV…GFPS), 386–434 (IRKI…FPGI), and 435–478 (NPKI…WFQC). Residues C291 and C478 are joined by a disulfide bond. Residue D298 participates in Ca(2+) binding. Positions 390 and 439 each coordinate Ca(2+).

The protein belongs to the peptidase M10A family. Requires Ca(2+) as cofactor. Zn(2+) is required as a cofactor.

It is found in the secreted. The protein localises to the extracellular space. Its subcellular location is the extracellular matrix. The catalysed reaction is Preferential cleavage where P1', P2' and P3' are hydrophobic residues.. In terms of biological role, metalloproteinase with a rather broad substrate specificity that can degrade fibronectin, laminin, gelatins of type I, III, IV, and V; collagens III, IV, X, and IX, and cartilage proteoglycans. Activates different molecules including growth factors, plasminogen or other matrix metalloproteinases such as MMP9. Once released into the extracellular matrix (ECM), the inactive pro-enzyme is activated by the plasmin cascade signaling pathway. Also acts intracellularly. For example, in dopaminergic neurons, gets activated by the serine protease HTRA2 upon stress and plays a pivotal role in DA neuronal degeneration by mediating microglial activation and alpha-synuclein/SNCA cleavage. In addition, plays a role in immune response and possesses antiviral activity against various viruses. Mechanistically, translocates from the cytoplasm into the cell nucleus upon virus infection to influence NF-kappa-B activities. In Oryctolagus cuniculus (Rabbit), this protein is Stromelysin-1 (MMP3).